The following is a 62-amino-acid chain: UPF0339 protein Atu0232 (62 aa).

It belongs to the UPF0339 family.

This chain is UPF0339 protein Atu0232, found in Agrobacterium fabrum (strain C58 / ATCC 33970) (Agrobacterium tumefaciens (strain C58)).